Here is a 1161-residue protein sequence, read N- to C-terminus: Mitogen-activated protein kinase kinase kinase (1161 aa).

An SH3 domain is found at 56–120; it reads GDGSLWTALY…PKDFVTDEDP (65 aa). The Protein kinase domain maps to 142-402; sequence LDIKEVIGSG…KEILKQLESI (261 aa). Residues 148–156 and Lys-169 contribute to the ATP site; that span reads IGSGGFCKV. Catalysis depends on Asp-264, which acts as the Proton acceptor. Thr-300 is modified (phosphothreonine; by autocatalysis). Ser-304 carries the post-translational modification Phosphoserine; by autocatalysis. Leucine-zipper regions lie at residues 426-447 and 461-482; these read IAGV…EEQL and LKIR…ELVM. Ser-525 and Ser-560 each carry phosphoserine. Disordered stretches follow at residues 560–615 and 658–678; these read SQLS…GSGG and TTNN…NQLN. Positions 571-583 are enriched in polar residues; it reads AQTSTHSSFSKSA. Residues 591 to 601 show a composition bias toward low complexity; the sequence is QQQNQQQVASL. 3 positions are modified to phosphoserine: Ser-685, Ser-773, and Ser-792. The interval 790–830 is disordered; it reads GNSPAVGRKKHSLDSSSHHPPANGSNSFALPNQLTLPSEDN. A compositionally biased stretch (polar residues) spans 812–830; it reads NGSNSFALPNQLTLPSEDN. Position 862 is a phosphothreonine (Thr-862). Disordered stretches follow at residues 988 to 1014, 1045 to 1093, and 1137 to 1161; these read RSAS…EAVN, EQRQ…SAGS, and GGSS…LERC. Residues 989-1010 show a composition bias toward low complexity; that stretch reads SASPSLSSSSTTASASPSIAST. Ser-993 is modified (phosphoserine). Positions 1052–1063 are enriched in basic residues; it reads NQKKQRPKHITK. A compositionally biased stretch (basic and acidic residues) spans 1073–1086; it reads GQHHEHDDHNDPQH. The segment covering 1150 to 1161 has biased composition (polar residues); sequence PQTQSCEQLERC.

Belongs to the protein kinase superfamily. STE Ser/Thr protein kinase family. MAP kinase kinase kinase subfamily. Homodimer. Mg(2+) is required as a cofactor. Post-translationally, autophosphorylation on serine and threonine residues within the activation loop plays a role in enzyme activation. In terms of tissue distribution, expressed both maternally and zygotically. Expressed uniformly in large quantities in the early embryo (stages 1-4). In the late embryo, expression is ubiquitous, but expression levels are dramatically reduced. Expressed in the adult head and thorax, and in S2 cells.

It catalyses the reaction L-seryl-[protein] + ATP = O-phospho-L-seryl-[protein] + ADP + H(+). The enzyme catalyses L-threonyl-[protein] + ATP = O-phospho-L-threonyl-[protein] + ADP + H(+). With respect to regulation, homodimerization via the leucine zipper domains is required for autophosphorylation and subsequent activation. Activated by C6-ceramide. Its function is as follows. Activates the JUN N-terminal pathway during dorsal closure. This chain is Mitogen-activated protein kinase kinase kinase, found in Drosophila melanogaster (Fruit fly).